The chain runs to 1073 residues: Probable nuclear hormone receptor HR38 (1073 aa).

7 disordered regions span residues 55–87 (NLNAPTHQQSHTSHLQHAQQHQTHQQHPLLPPP), 150–185 (TPAPPATEPRKIKPLGAGKLKVGKTDSNSDSNSNCD), 263–326 (TQTA…LVSP), 437–458 (ALHAQQQQQQQQQQQQQQQQHQ), 492–514 (KYNSSSGSSPQQASSSSTAAPTP), 529–579 (PPLS…NSGG), and 618–640 (GQQQQQQQQSYQQHNYNSHNGER). Composition is skewed to low complexity over residues 59 to 82 (PTHQQSHTSHLQHAQQHQTHQQHP), 175 to 185 (DSNSDSNSNCD), and 263 to 277 (TQTASTTTTTSASAA). Residues 279-291 (HHQHHNHLLHQQH) are compositionally biased toward basic residues. 3 stretches are compositionally biased toward low complexity: residues 292 to 326 (HNQQQQQQQQQQQQQQQQQQQEHLQQQHQQQLVSP), 441 to 458 (QQQQQQQQQQQQQQQQHQ), and 495 to 514 (SSSGSSPQQASSSSTAAPTP). Low complexity predominate over residues 619–636 (QQQQQQQQSYQQHNYNSH). The segment at residues 741–816 (SQLCAVCGDT…VGMVKEVVRT (76 aa)) is a DNA-binding region (nuclear receptor). 2 NR C4-type zinc fingers span residues 744–764 (CAVCGDTAACQHYGVRTCEGC) and 780–804 (CLADKNCPVDKRRRNRCQFCRFQKC). The interval 819–841 (LKGRRGRLPSKPKSPQESPPSPP) is disordered. In terms of domain architecture, NR LBD spans 840–1070 (PPISLITALV…ALIENMFVTT (231 aa)).

The protein belongs to the nuclear hormone receptor family. NR4 subfamily. In terms of assembly, forms a heterodimer with USP. As to expression, ubiquitously expressed in preblastoderm embryos, specifically in central nervous system and intestinal tract. Highly expressed in third instar larval imaginal disks and brain complexes, but not in ovaries.

It is found in the nucleus. Its function is as follows. Binds to NGFI-B response elements. Plays an important role in late stages of epidermal metamorphosis. The chain is Probable nuclear hormone receptor HR38 (Hr38) from Drosophila melanogaster (Fruit fly).